A 331-amino-acid polypeptide reads, in one-letter code: ADP,ATP carrier protein 1, mitochondrial (331 aa).

Solcar repeat units follow at residues 29–122 (KNFA…FKRM), 134–226 (KWFG…LKPV), and 238–320 (ASFA…LQIL). The next 5 membrane-spanning stretches (helical) occupy residues 31 to 58 (FAID…VKLL), 99 to 123 (TANV…KRMF), 132 to 152 (YWKW…SSLF), 202 to 223 (FNIS…YDSL), and 237 to 257 (FASF…SYPI). ADP is bound by residues R104 and K116. Position 261 (R261) interacts with ADP. An important for transport activity region spans residues 261–266 (RRRMMM). Residues 261 to 266 (RRRMMM) carry the Nucleotide carrier signature motif motif. The helical transmembrane segment at 297-317 (AGANILRAIAGAGVLSGYDQL) threads the bilayer.

This sequence belongs to the mitochondrial carrier (TC 2.A.29) family. In terms of assembly, monomer.

The protein resides in the mitochondrion inner membrane. The enzyme catalyses ADP(in) + ATP(out) = ADP(out) + ATP(in). Its activity is regulated as follows. The matrix-open state (m-state) is inhibited by the membrane-permeable bongkrekic acid (BKA). The cytoplasmic-open state (c-state) is inhibited by the membrane-impermeable toxic inhibitor carboxyatractyloside (CATR). Functionally, ADP:ATP antiporter that mediates import of ADP into the mitochondrial matrix for ATP synthesis, and export of ATP out to fuel the cell. Cycles between the cytoplasmic-open state (c-state) and the matrix-open state (m-state): operates by the alternating access mechanism with a single substrate-binding site intermittently exposed to either the cytosolic (c-state) or matrix (m-state) side of the inner mitochondrial membrane. The protein is ADP,ATP carrier protein 1, mitochondrial (ANT-G1) of Triticum aestivum (Wheat).